Reading from the N-terminus, the 383-residue chain is tRNA-specific 2-thiouridylase MnmA (383 aa).

ATP is bound by residues 9–16 (GMSGGVDS) and Met-35. Residues 95 to 97 (NPD) are interaction with target base in tRNA. Residue Cys-100 is the Nucleophile of the active site. A disulfide bridge links Cys-100 with Cys-196. Gly-124 contacts ATP. Residues 146 to 148 (KDQ) form an interaction with tRNA region. Cys-196 functions as the Cysteine persulfide intermediate in the catalytic mechanism. Residues 308–309 (RY) form an interaction with tRNA region.

The protein belongs to the MnmA/TRMU family.

The protein resides in the cytoplasm. It carries out the reaction S-sulfanyl-L-cysteinyl-[protein] + uridine(34) in tRNA + AH2 + ATP = 2-thiouridine(34) in tRNA + L-cysteinyl-[protein] + A + AMP + diphosphate + H(+). Functionally, catalyzes the 2-thiolation of uridine at the wobble position (U34) of tRNA, leading to the formation of s(2)U34. The sequence is that of tRNA-specific 2-thiouridylase MnmA from Burkholderia pseudomallei (strain 668).